The chain runs to 1312 residues: Rho GTPase-activating protein gacG (1312 aa).

6 disordered regions span residues 52–74 (VENNNNNNNNNNNSENNKYKRSQ), 111–158 (SNNN…SSSD), 314–519 (ISSS…PRNF), 762–831 (NSIS…SSTG), 1185–1230 (NNNN…SSSV), and 1282–1312 (TGTSETSIHSSNSPISSSISRSPSLTDIVEE). Low complexity-rich tracts occupy residues 53–67 (ENNNNNNNNNNNSEN) and 111–146 (SNNNNSSNSSCNSTPSTSPSSTPRSTNSPRSTYSPR). Positions 147-158 (NNNNNFTESSSD) are enriched in polar residues. Low complexity-rich tracts occupy residues 328–355 (TTAAATGSSLSNSNSNSNLQNSQSANNS), 373–397 (HHSSLTHSNSNSNLISTNTSSIGNS), and 414–436 (LNLTENNLNNSSSTSSSPRNNGN). Residues 437–449 (EVIQSSSSTSSPR) are compositionally biased toward polar residues. The segment covering 479-507 (SSTNSLNNSTSSLKSSNNNILQQQQQQQQ) has biased composition (low complexity). Composition is skewed to polar residues over residues 508–518 (HYDSAPTTPRN) and 763–776 (SISTNPLTNSGNIA). Residues 792–816 (NNNNNNNNNNNNNNNNNNNNNNNNN) are compositionally biased toward low complexity. In terms of domain architecture, Rho-GAP spans 1030–1212 (SKIDPITGFN…HHNSHHHRDN (183 aa)). Positions 1196–1210 (HHHHHHHHHNSHHHR) are enriched in basic residues. 2 stretches are compositionally biased toward low complexity: residues 1213 to 1222 (NNNNSNNNSS) and 1282 to 1305 (TGTSETSIHSSNSPISSSISRSPS).

Its subcellular location is the cytoplasm. Its function is as follows. Rho GTPase-activating protein involved in the signal transduction pathway. This chain is Rho GTPase-activating protein gacG (gacG), found in Dictyostelium discoideum (Social amoeba).